The following is a 452-amino-acid chain: Phosphoglucosamine mutase (452 aa).

Ser-103 acts as the Phosphoserine intermediate in catalysis. Mg(2+)-binding residues include Ser-103, Asp-244, Asp-246, and Asp-248. A Phosphoserine modification is found at Ser-103.

This sequence belongs to the phosphohexose mutase family. Mg(2+) serves as cofactor. In terms of processing, activated by phosphorylation.

The catalysed reaction is alpha-D-glucosamine 1-phosphate = D-glucosamine 6-phosphate. Functionally, catalyzes the conversion of glucosamine-6-phosphate to glucosamine-1-phosphate. The sequence is that of Phosphoglucosamine mutase from Fusobacterium nucleatum subsp. nucleatum (strain ATCC 25586 / DSM 15643 / BCRC 10681 / CIP 101130 / JCM 8532 / KCTC 2640 / LMG 13131 / VPI 4355).